The following is a 947-amino-acid chain: Bifunctional glutamine synthetase adenylyltransferase/adenylyl-removing enzyme (947 aa).

The adenylyl removase stretch occupies residues 1–440 (MTPLSSPLSQ…VFNELIGDDE (440 aa)). The segment at 450–947 (SEPWREVWQD…ASWRKWLVAV (498 aa)) is adenylyl transferase.

It belongs to the GlnE family. It depends on Mg(2+) as a cofactor.

It carries out the reaction [glutamine synthetase]-O(4)-(5'-adenylyl)-L-tyrosine + phosphate = [glutamine synthetase]-L-tyrosine + ADP. It catalyses the reaction [glutamine synthetase]-L-tyrosine + ATP = [glutamine synthetase]-O(4)-(5'-adenylyl)-L-tyrosine + diphosphate. In terms of biological role, involved in the regulation of glutamine synthetase GlnA, a key enzyme in the process to assimilate ammonia. When cellular nitrogen levels are high, the C-terminal adenylyl transferase (AT) inactivates GlnA by covalent transfer of an adenylyl group from ATP to specific tyrosine residue of GlnA, thus reducing its activity. Conversely, when nitrogen levels are low, the N-terminal adenylyl removase (AR) activates GlnA by removing the adenylyl group by phosphorolysis, increasing its activity. The regulatory region of GlnE binds the signal transduction protein PII (GlnB) which indicates the nitrogen status of the cell. The chain is Bifunctional glutamine synthetase adenylyltransferase/adenylyl-removing enzyme from Salmonella enteritidis PT4 (strain P125109).